A 228-amino-acid chain; its full sequence is Urease accessory protein UreF (228 aa).

The protein belongs to the UreF family. In terms of assembly, ureD, UreF and UreG form a complex that acts as a GTP-hydrolysis-dependent molecular chaperone, activating the urease apoprotein by helping to assemble the nickel containing metallocenter of UreC. The UreE protein probably delivers the nickel.

The protein resides in the cytoplasm. In terms of biological role, required for maturation of urease via the functional incorporation of the urease nickel metallocenter. This chain is Urease accessory protein UreF, found in Blochmanniella pennsylvanica (strain BPEN).